The following is a 615-amino-acid chain: Gluconate 2-dehydrogenase flavoprotein (615 aa).

The N-terminal stretch at 1-22 (MERGERVSVPVSGYSRGEGVTV) is a signal peptide. The active-site Proton acceptor is the H542.

It belongs to the GMC oxidoreductase family. In terms of assembly, heterotrimer. It depends on FAD as a cofactor.

The protein resides in the cell membrane. It carries out the reaction D-gluconate + A = 2-dehydro-D-gluconate + AH2. In terms of biological role, part of the heterotrimer that catalyzes the conversion of D-gluconate to 2-dehydro-D-gluconate. This subunit functions as the dehydrogenase. The chain is Gluconate 2-dehydrogenase flavoprotein from Pantoea cypripedii (Pectobacterium cypripedii).